The following is a 182-amino-acid chain: Cytidylate kinase (182 aa).

An ATP-binding site is contributed by 7–15 (GPPGSGKSS).

This sequence belongs to the cytidylate kinase family. Type 2 subfamily.

Its subcellular location is the cytoplasm. It catalyses the reaction CMP + ATP = CDP + ADP. The enzyme catalyses dCMP + ATP = dCDP + ADP. In Sulfolobus acidocaldarius (strain ATCC 33909 / DSM 639 / JCM 8929 / NBRC 15157 / NCIMB 11770), this protein is Cytidylate kinase (cmk).